The sequence spans 360 residues: Phospho-N-acetylmuramoyl-pentapeptide-transferase (360 aa).

A run of 10 helical transmembrane segments spans residues 25–45 (RAILGVLTALGLSMVLGPWVI), 73–93 (TMGGTLILFSIVTATLLWADL), 97–117 (YVLAVLFVTITFGLIGWVDDY), 132–152 (WKYFWQSACGFIVAIALFVTA), 168–188 (VAWQMGVLYVFVTYLMIVGFS), 199–219 (GLAIMPTVMVGSALGVIAYLV), 236–256 (SGELVVYCAALAGAGLGFLWF), 263–283 (VFMGDVGALALGAALGVIAVI), 288–308 (IVFFIMSGIFVMETVSVILQV), and 339–359 (IVRFWIITVILVLFGLATLKI).

This sequence belongs to the glycosyltransferase 4 family. MraY subfamily. Mg(2+) serves as cofactor.

The protein resides in the cell inner membrane. It catalyses the reaction UDP-N-acetyl-alpha-D-muramoyl-L-alanyl-gamma-D-glutamyl-meso-2,6-diaminopimeloyl-D-alanyl-D-alanine + di-trans,octa-cis-undecaprenyl phosphate = di-trans,octa-cis-undecaprenyl diphospho-N-acetyl-alpha-D-muramoyl-L-alanyl-D-glutamyl-meso-2,6-diaminopimeloyl-D-alanyl-D-alanine + UMP. It participates in cell wall biogenesis; peptidoglycan biosynthesis. Its function is as follows. Catalyzes the initial step of the lipid cycle reactions in the biosynthesis of the cell wall peptidoglycan: transfers peptidoglycan precursor phospho-MurNAc-pentapeptide from UDP-MurNAc-pentapeptide onto the lipid carrier undecaprenyl phosphate, yielding undecaprenyl-pyrophosphoryl-MurNAc-pentapeptide, known as lipid I. This chain is Phospho-N-acetylmuramoyl-pentapeptide-transferase, found in Teredinibacter turnerae (strain ATCC 39867 / T7901).